The sequence spans 419 residues: Glucose-1-phosphate adenylyltransferase (419 aa).

Alpha-D-glucose 1-phosphate contacts are provided by residues tyrosine 106, glycine 171, 186–187, and serine 204; that span reads EK.

Belongs to the bacterial/plant glucose-1-phosphate adenylyltransferase family. As to quaternary structure, homotetramer.

It catalyses the reaction alpha-D-glucose 1-phosphate + ATP + H(+) = ADP-alpha-D-glucose + diphosphate. The protein operates within glycan biosynthesis; glycogen biosynthesis. Functionally, involved in the biosynthesis of ADP-glucose, a building block required for the elongation reactions to produce glycogen. Catalyzes the reaction between ATP and alpha-D-glucose 1-phosphate (G1P) to produce pyrophosphate and ADP-Glc. The sequence is that of Glucose-1-phosphate adenylyltransferase from Roseobacter denitrificans (strain ATCC 33942 / OCh 114) (Erythrobacter sp. (strain OCh 114)).